The following is a 172-amino-acid chain: R-phycocyanin-2 beta chain (172 aa).

Asparagine 72 is modified (N4-methylasparagine). Cysteine 82 contacts (2R,3E)-phycocyanobilin. Cysteine 153 contributes to the (2R,3E)-phycoerythrobilin binding site.

The protein belongs to the phycobiliprotein family. As to quaternary structure, heterodimer of an alpha and a beta chain. In terms of processing, contains two covalently linked bilin chromophores.

It localises to the cellular thylakoid membrane. Its function is as follows. Light-harvesting photosynthetic bile pigment-protein from the phycobiliprotein complex. The protein is R-phycocyanin-2 beta chain (rpcB) of Synechococcus sp. (strain WH8020).